Here is a 5412-residue protein sequence, read N- to C-terminus: Mucin-4 (5412 aa).

The first 28 residues, 1 to 28 (MKGARWRRVPWVSLSCLCLCLLPHVVPG), serve as a signal peptide directing secretion. Disordered regions lie at residues 40 to 87 (TAAP…TTSK) and 142 to 249 (TSTD…ATSS). Residues 43-4241 (PVTSTGSTTA…SVSTGHATPL (4199 aa)) are variable number of tandem repeats (VNTR). The span at 142–163 (TSTDSTLGNTEETSTAGTESST) shows a compositional bias: low complexity. 2 O-linked (GalNAc...) threonine glycosylation sites follow: Thr-154 and Thr-156. Polar residues predominate over residues 164–199 (PVTSAVSITAGQEGQSRTTSWRTSIQDTSASSQNHW). Low complexity predominate over residues 200–223 (TRSTQTTRESQTSTLTHRTTSTPS). Positions 224-249 (FSPSVHNVTGTVSQKTSPSGETATSS) are enriched in polar residues. N-linked (GlcNAc...) asparagine glycosylation is present at Asn-230. Thr-234 is a glycosylation site (O-linked (GalNAc...) threonine). Residue Asn-255 is glycosylated (N-linked (GlcNAc...) asparagine). Composition is skewed to polar residues over residues 267 to 285 (TTST…SVPV), 306 to 328 (SPAT…HQTQ), and 358 to 367 (GFNPSGTVSQ). Disordered stretches follow at residues 267–286 (TTST…VPVT), 303–328 (EGQS…HQTQ), 353–383 (LSSP…PSSV), 438–473 (LSPS…SFSP), 488–580 (WPSS…ALLS), 592–853 (TATS…ASAS), 868–963 (VPGT…SGSG), 983–1864 (SSAS…DASS), 1878–2078 (ASSV…TGHA), 2111–2220 (TALH…ASTG), 2232–2814 (SAST…TGHA), 2837–3306 (IPSS…SSVS), 3320–3580 (SAST…VSTG), 3592–3644 (SVST…VSTG), 3656–3756 (SVST…ASTG), and 3769–4223 (VSTG…GHAT). Thr-364, Thr-369, and Thr-376 each carry an O-linked (GalNAc...) threonine glycan. Residues 368–383 (ETFPSGETTTSSPSSV) are compositionally biased toward low complexity. Composition is skewed to polar residues over residues 450-459 (AFHTQQSEGA), 488-526 (WPSS…TGTA), and 546-557 (TTYSSHSTTLPK). 2 stretches are compositionally biased toward low complexity: residues 558–577 (TTGA…TGEA) and 615–627 (STNH…TSTS). The N-linked (GlcNAc...) asparagine glycan is linked to Asn-617. 3 O-linked (GalNAc...) threonine glycosylation sites follow: Thr-620, Thr-666, and Thr-688. Positions 628–677 (PQESPAVSQRGHTQAPQTTQESQTTRSVSPMTDTKTVTTPGSSFTASGHS) are enriched in polar residues. Low complexity predominate over residues 705 to 717 (TTQAPTTALQAAP). The span at 729–746 (GTSLSKTGALTLANSVVS) shows a compositional bias: polar residues. The O-linked (GalNAc...) threonine glycan is linked to Thr-747. Over residues 756–771 (TSASASTSPDTAAAMT) the composition is skewed to low complexity. Residues 772 to 789 (HTHQAESTEASGQTQTSE) show a composition bias toward polar residues. The segment covering 790–828 (PASSGSRTTSAGTATPSSSGASGTTPSGSEGISTSGETT) has biased composition (low complexity). Thr-797, Thr-798, Thr-802, Thr-804, Thr-813, and Thr-814 each carry an O-linked (GalNAc...) threonine glycan. The segment covering 829-852 (RFSSNPSRDSHTTQSTTELLSASA) has biased composition (polar residues). O-linked (GalNAc...) threonine glycans are attached at residues Thr-881, Thr-886, and Thr-892. Residues 885–903 (PTGQSSPTSPSASPQETAA) show a composition bias toward low complexity. Residues 907–928 (MAQTQRTRTSRGSDTISLASQA) show a composition bias toward polar residues. The span at 929–950 (TDTFSTVPPTPPSITSTGLTSP) shows a compositional bias: low complexity. 54 O-linked (GalNAc...) threonine glycosylation sites follow: Thr-931, Thr-934, Thr-938, Thr-943, Thr-945, Thr-948, Thr-952, Thr-954, Thr-1003, Thr-1007, Thr-1012, Thr-1019, Thr-1022, Thr-1023, Thr-1028, Thr-1030, Thr-1035, Thr-1039, Thr-1044, Thr-1051, Thr-1055, Thr-1060, Thr-1062, Thr-1067, Thr-1071, Thr-1076, Thr-1083, Thr-1086, Thr-1087, Thr-1092, Thr-1094, Thr-1099, Thr-1103, Thr-1108, Thr-1110, Thr-1115, Thr-1118, Thr-1119, Thr-1124, Thr-1126, Thr-1131, Thr-1135, Thr-1172, Thr-1179, Thr-1182, Thr-1183, Thr-1188, Thr-1195, Thr-1199, Thr-1204, Thr-1236, Thr-1243, Thr-1246, and Thr-1247. Polar residues predominate over residues 951 to 963 (QTETHTLSPSGSG). Positions 1007-1024 (TPLPVTSPSSVSTGHTTP) are enriched in low complexity. The segment covering 1028 to 1054 (TDTSSESTGHVTPLPVTSFSSASTGDS) has biased composition (polar residues). Polar residues predominate over residues 1060-1086 (TDTSSASTGHVTPLPVTSLSSASTGDT). Polar residues predominate over residues 1092–1118 (TDTSSASTGHATSLPVTDTSSVSTGHT). Composition is skewed to polar residues over residues 1124 to 1150 (TDTS…TGHT) and 1157 to 1197 (DASS…STGH). 2 stretches are compositionally biased toward polar residues: residues 1204–1213 (TDTSSASTGH) and 1221–1246 (DASS…TGHT). Positions 1252-1262 (TDTSSASTGQA) are enriched in polar residues. Low complexity predominate over residues 1263 to 1279 (TSLLVTDTSSVSTGDTT). Thr-1278, Thr-1279, Thr-1284, Thr-1286, Thr-1291, Thr-1295, Thr-1300, Thr-1307, Thr-1311, Thr-1316, Thr-1323, Thr-1326, Thr-1332, Thr-1339, Thr-1342, Thr-1343, and Thr-1348 each carry an O-linked (GalNAc...) threonine glycan. Residues 1281-1325 (LPVTSTSSASTGHVTPLHVTSPSSASTGHATPLPVTSLSSASTGD) are compositionally biased toward polar residues. The span at 1332–1342 (TSPSSASTGDT) shows a compositional bias: polar residues. 2 stretches are compositionally biased toward polar residues: residues 1349 to 1358 (DASSVSTGHT) and 1365 to 1405 (DASS…STGH). 12 O-linked (GalNAc...) threonine glycosylation sites follow: Thr-1380, Thr-1387, Thr-1390, Thr-1391, Thr-1396, Thr-1403, Thr-1407, Thr-1412, Thr-1444, Thr-1451, Thr-1454, and Thr-1455. Polar residues-rich tracts occupy residues 1412 to 1421 (TDTSSASTGH) and 1429 to 1454 (DASS…TGHT). The segment covering 1460–1470 (TDTSSASTGQA) has biased composition (polar residues). Over residues 1471–1487 (TSLLVTDTSSVSTGDTT) the composition is skewed to low complexity. 36 O-linked (GalNAc...) threonine glycosylation sites follow: Thr-1486, Thr-1487, Thr-1492, Thr-1494, Thr-1499, Thr-1503, Thr-1508, Thr-1515, Thr-1519, Thr-1524, Thr-1531, Thr-1534, Thr-1540, Thr-1547, Thr-1550, Thr-1551, Thr-1556, Thr-1563, Thr-1566, Thr-1567, Thr-1572, Thr-1579, Thr-1582, Thr-1583, Thr-1588, Thr-1590, Thr-1598, Thr-1599, Thr-1604, Thr-1611, Thr-1614, Thr-1615, Thr-1620, Thr-1622, Thr-1627, and Thr-1630. A compositionally biased stretch (polar residues) spans 1489–1533 (LPVTSTSSASTGHVTPLHVTSPSSASTGHATPLPVTSLSSASTGD). A compositionally biased stretch (polar residues) spans 1540-1550 (TSPSSASTGDT). The segment covering 1557–1582 (DASSVSTGHTTPLPVTSPSSASTGHT) has biased composition (polar residues). Over residues 1588-1614 (TDTSSASKGDTTPLPVTSPSSASTGHT) the composition is skewed to polar residues. Positions 1620–1631 (TDTSSASTGDTT) are enriched in low complexity. Residues 1633 to 1661 (LPVTNASSLSTGHATPLHVTSPSSASTGH) are compositionally biased toward polar residues. An N-linked (GlcNAc...) asparagine glycan is attached at Asn-1637. O-linked (GalNAc...) threonine glycans are attached at residues Thr-1659, Thr-1663, Thr-1668, Thr-1670, Thr-1675, Thr-1679, Thr-1716, Thr-1723, Thr-1726, Thr-1727, Thr-1732, Thr-1764, Thr-1766, Thr-1812, Thr-1819, Thr-1822, Thr-1823, Thr-1828, Thr-1835, Thr-1838, Thr-1839, Thr-1844, Thr-1854, and Thr-1855. Residues 1668 to 1679 (TSTSSASTGHAT) are compositionally biased toward low complexity. Polar residues-rich tracts occupy residues 1701-1741 (DVSS…STGH), 1749-1773 (DASS…STAH), and 1812-1822 (TSPSSASTGDT). The span at 1828–1840 (TDASSASTGDTTS) shows a compositional bias: low complexity. Composition is skewed to polar residues over residues 1841–1864 (LPVT…DASS), 1892–1902 (TDTNSASTGDT), and 1909–1950 (DASS…SGHT). 44 O-linked (GalNAc...) threonine glycosylation sites follow: Thr-1931, Thr-1934, Thr-1935, Thr-1940, Thr-1950, Thr-1951, Thr-1956, Thr-1963, Thr-1995, Thr-1999, Thr-2004, Thr-2006, Thr-2015, Thr-2020, Thr-2027, Thr-2030, Thr-2031, Thr-2036, Thr-2038, Thr-2047, Thr-2052, Thr-2062, Thr-2063, Thr-2132, Thr-2137, Thr-2139, Thr-2142, Thr-2143, Thr-2148, Thr-2150, Thr-2155, Thr-2159, Thr-2164, Thr-2180, Thr-2182, Thr-2187, Thr-2191, Thr-2196, Thr-2198, Thr-2203, Thr-2207, Thr-2244, Thr-2254, and Thr-2255. The segment covering 1957-1981 (DASSVPTGHATSLPVTDASSVSTGH) has biased composition (polar residues). Positions 2004–2030 (TDTSSVSTGQATPLPVTSLSSASTGDT) are enriched in polar residues. Polar residues predominate over residues 2036–2077 (TDTSSASTGQDTPLPVTSLSSVSTGDTTPLPVTNPSSASTGH). A compositionally biased stretch (low complexity) spans 2125 to 2146 (DTTPLPVTSPSSTSTGDTTPLP). A compositionally biased stretch (polar residues) spans 2148–2189 (TETSSVSTGHATSLPVTDTSSASTGHATSLPVTDTSSASTGH). Composition is skewed to polar residues over residues 2196–2219 (TDTS…SAST) and 2232–2254 (SAST…TGDT). The span at 2261–2270 (DASSVSTGHA) shows a compositional bias: polar residues. A compositionally biased stretch (low complexity) spans 2271-2283 (TSLPVTSLSSVST). 26 O-linked (GalNAc...) threonine glycosylation sites follow: Thr-2283, Thr-2286, Thr-2287, Thr-2292, Thr-2299, Thr-2303, Thr-2308, Thr-2324, Thr-2331, Thr-2334, Thr-2335, Thr-2340, Thr-2347, Thr-2351, Thr-2356, Thr-2363, Thr-2366, Thr-2367, Thr-2372, Thr-2382, Thr-2383, Thr-2388, Thr-2395, Thr-2398, Thr-2399, and Thr-2406. Residues 2284–2301 (GDTTPLPVTSPSSASTGH) are compositionally biased toward polar residues. Positions 2309-2349 (DASSASTGHATPLPVTSLSSASTGDTTPLPVTSPSSASTGH) are enriched in polar residues. A compositionally biased stretch (low complexity) spans 2366–2399 (TTPLPVTSSSSASSGHTTPLPVTDASSASTGDTT). Polar residues-rich tracts occupy residues 2404 to 2413 (TDTSSASTGH) and 2421 to 2445 (GLSS…STGH). N-linked (GlcNAc...) asparagine glycosylation is present at Asn-2437. 14 O-linked (GalNAc...) threonine glycosylation sites follow: Thr-2452, Thr-2454, Thr-2459, Thr-2462, Thr-2463, Thr-2468, Thr-2500, Thr-2507, Thr-2510, Thr-2511, Thr-2516, Thr-2518, Thr-2523, and Thr-2526. Low complexity predominate over residues 2452 to 2471 (TSTSSASTGDTTPLPGTDTS). Positions 2485 to 2510 (DASSVSTGDTTRLPVTSPSSASTGHT) are enriched in polar residues. A compositionally biased stretch (polar residues) spans 2517–2573 (DTPSASTGDTTPLPVTNASSLSTRHATSLHVTSPSSASTGHATSLPVTDTSAASTGH). N-linked (GlcNAc...) asparagine glycosylation is present at Asn-2533. 24 O-linked (GalNAc...) threonine glycosylation sites follow: Thr-2564, Thr-2566, Thr-2571, Thr-2575, Thr-2580, Thr-2582, Thr-2587, Thr-2590, Thr-2591, Thr-2596, Thr-2598, Thr-2619, Thr-2622, Thr-2623, Thr-2628, Thr-2660, Thr-2667, Thr-2670, Thr-2671, Thr-2676, Thr-2683, Thr-2687, Thr-2692, and Thr-2694. Positions 2580–2591 (TSTSSASTGDTT) are enriched in low complexity. 2 stretches are compositionally biased toward polar residues: residues 2597–2637 (DTYS…STGH) and 2645–2691 (DASS…SLPV). Residues 2692 to 2704 (TDTSSASTGDTTS) are compositionally biased toward low complexity. A compositionally biased stretch (polar residues) spans 2705–2723 (LPVTDTSSAYTGDTTSLPV). The span at 2724–2735 (TDTSSSSTGDTT) shows a compositional bias: low complexity. 8 O-linked (GalNAc...) threonine glycosylation sites follow: Thr-2740, Thr-2742, Thr-2750, Thr-2751, Thr-2756, Thr-2758, Thr-2763, and Thr-2767. Residues 2740–2750 (TETSSVSTGDT) show a composition bias toward polar residues. The span at 2756–2798 (TDTSSASTGHATPLPVTNTSSVSTGHATPLHVTSPSSASTGHT) shows a compositional bias: polar residues. N-linked (GlcNAc...) asparagine glycosylation is present at Asn-2773. Thr-2779, Thr-2783, Thr-2788, Thr-2795, Thr-2798, Thr-2799, and Thr-2804 each carry an O-linked (GalNAc...) threonine glycan. 2 stretches are compositionally biased toward polar residues: residues 2805–2814 (DASSVSTGHA) and 2837–2846 (IPSSASSGHT). Residues Thr-2846, Thr-2847, and Thr-2852 are each glycosylated (O-linked (GalNAc...) threonine). Positions 2853 to 2877 (DASSVSTGHATSLPVTDASSVSTGH) are enriched in polar residues. Residues 2895 to 2907 (TPLPLTSLSSVST) show a composition bias toward low complexity. Residues Thr-2910, Thr-2911, Thr-2916, Thr-2918, Thr-2923, Thr-2927, Thr-2932, Thr-2939, Thr-2942, Thr-2943, Thr-2948, Thr-2950, Thr-2955, Thr-2959, Thr-2966, Thr-2971, and Thr-2975 are each glycosylated (O-linked (GalNAc...) threonine). Polar residues predominate over residues 2916-2942 (TDTSSASTGQATPLPVTSLSSVSTGDT). Residues 2948-2973 (TDTSSASTGHATSLPVTDTSSASTGH) show a composition bias toward polar residues. Polar residues-rich tracts occupy residues 2980-2989 (TDTSSASTGH) and 3009-3037 (LPVT…STGH). 4 O-linked (GalNAc...) threonine glycosylation sites follow: Thr-3023, Thr-3028, Thr-3035, and Thr-3039. Polar residues predominate over residues 3044–3069 (TDTSSASTGHANPLHVTSPSSASTGH). Residues Thr-3071, Thr-3076, Thr-3078, Thr-3083, Thr-3087, Thr-3092, Thr-3099, Thr-3102, Thr-3103, Thr-3108, Thr-3115, Thr-3118, Thr-3119, Thr-3124, Thr-3126, Thr-3131, Thr-3135, Thr-3140, Thr-3142, Thr-3147, Thr-3150, Thr-3151, Thr-3156, Thr-3158, Thr-3163, Thr-3167, Thr-3172, Thr-3179, Thr-3182, Thr-3183, Thr-3188, Thr-3220, Thr-3227, Thr-3230, Thr-3231, Thr-3236, Thr-3243, Thr-3247, Thr-3252, and Thr-3254 are each glycosylated (O-linked (GalNAc...) threonine). Residues 3076-3118 (TDTSSASTGHATPLPVTSLSSVSTGDTTPLPVTSPSSASTGHT) are compositionally biased toward polar residues. Positions 3124 to 3134 (TDTSSASTGQA) are enriched in polar residues. Residues 3140–3151 (TSTSSASTGDTT) show a composition bias toward low complexity. Composition is skewed to polar residues over residues 3156–3197 (TDTS…STGH) and 3205–3251 (DASS…SLPV). Residues 3252-3264 (TDTSSASTGDTTS) are compositionally biased toward low complexity. Residues 3265–3283 (LPVTDTSSAYTGDTTSLPV) are compositionally biased toward polar residues. A compositionally biased stretch (low complexity) spans 3284–3295 (TDTSSSSTGDTT). Thr-3294, Thr-3332, Thr-3339, Thr-3342, Thr-3343, Thr-3348, Thr-3350, Thr-3355, and Thr-3359 each carry an O-linked (GalNAc...) threonine glycan. A compositionally biased stretch (polar residues) spans 3320-3337 (SASTGHATPLHVTSPSSA). Over residues 3338 to 3356 (STGDTTPVPVTDTSSVSTG) the composition is skewed to low complexity. 2 stretches are compositionally biased toward polar residues: residues 3365 to 3374 (GLSSASTGDT) and 3381 to 3405 (DISS…STGD). Asn-3397 carries N-linked (GlcNAc...) asparagine glycosylation. Thr-3398, Thr-3403, Thr-3406, Thr-3412, Thr-3419, Thr-3423, Thr-3428, Thr-3430, Thr-3435, Thr-3439, and Thr-3444 each carry an O-linked (GalNAc...) threonine glycan. A compositionally biased stretch (polar residues) spans 3412 to 3421 (TSPSSASTGH). Low complexity predominate over residues 3428–3471 (TSTSSASTGHATPVPVTSTSSASTGHTTPLPVTDTSSASTGDTT). Residue Ser-3445 is glycosylated (O-linked (GalNAc...) serine). O-linked (GalNAc...) threonine glycans are attached at residues Thr-3446, Thr-3451, Thr-3454, Thr-3455, Thr-3460, Thr-3462, Thr-3467, Thr-3470, Thr-3471, Thr-3476, Thr-3483, Thr-3486, Thr-3487, Thr-3492, Thr-3499, Thr-3502, Thr-3504, Thr-3508, Thr-3515, Thr-3519, Thr-3524, Thr-3526, Thr-3531, Thr-3535, Thr-3540, Thr-3547, Thr-3550, Thr-3551, Thr-3556, Thr-3567, Thr-3614, Thr-3615, Thr-3622, Thr-3678, Thr-3679, Thr-3686, Thr-3691, Thr-3695, Thr-3700, Thr-3710, Thr-3711, Thr-3716, Thr-3718, Thr-3723, Thr-3727, Thr-3732, Thr-3739, Thr-3743, Thr-3748, Thr-3780, Thr-3787, Thr-3790, Thr-3791, Thr-3796, Thr-3798, Thr-3803, Thr-3807, Thr-3812, Thr-3822, Thr-3823, Thr-3828, Thr-3835, Thr-3839, Thr-3844, Thr-3851, Thr-3854, Thr-3860, Thr-3867, Thr-3871, Thr-3876, Thr-3883, Thr-3886, Thr-3887, Thr-3892, Thr-3894, Thr-3899, Thr-3903, Thr-3935, Thr-3940, Thr-3942, Thr-3947, Thr-3950, Thr-3951, Thr-3956, Thr-3958, Thr-3963, Thr-3967, Thr-3972, Thr-3979, Thr-3983, Thr-3988, Thr-3990, Thr-3995, Thr-3999, Thr-4004, Thr-4006, Thr-4011, Thr-4015, and Thr-4020. Over residues 3473 to 3486 (LPVTSPSSASTGHT) the composition is skewed to polar residues. Polar residues predominate over residues 3493–3517 (IPSSASTGDTSTLPVTGASSASTGH). Residues 3524 to 3550 (TDTSSVSTGHATPLPVTSLSSVSTGDT) show a composition bias toward polar residues. A compositionally biased stretch (polar residues) spans 3557–3580 (DASSASTGQATPLPVTSLSSVSTG). The span at 3604-3615 (TDTSSASTGDTT) shows a compositional bias: low complexity. Over residues 3620–3644 (TDTSSASTGQATPLPVTSLSSVSTG) the composition is skewed to polar residues. The span at 3668–3679 (TDTSSASTGDTT) shows a compositional bias: low complexity. A compositionally biased stretch (polar residues) spans 3684–3694 (TDTSSASTGQA). Over residues 3710–3728 (TTPLPVTSTSSVSTGHVTP) the composition is skewed to low complexity. Residues 3730–3741 (HVTSPSSASTGH) show a composition bias toward polar residues. Residues 3780–3791 (TDASSASTGDTT) are compositionally biased toward low complexity. The segment covering 3796-3822 (TDTSSASTGQATPLPVTSLSSVSTGDT) has biased composition (polar residues). Over residues 3860 to 3869 (TSPSSASTGH) the composition is skewed to polar residues. Residues 3877 to 3886 (GLSSASTGDT) show a composition bias toward polar residues. Residues 3892 to 3901 (TDTSSASTRH) are compositionally biased toward polar residues. Low complexity predominate over residues 3940–3951 (TSTSSASTGDTT). A compositionally biased stretch (polar residues) spans 3956–3981 (TDTSSVSTGHATSLPVTSRSSASTGH). Residues 3988 to 3997 (TDTSSVSTGH) are compositionally biased toward polar residues. A compositionally biased stretch (low complexity) spans 3999-4011 (TPLPVTSTSSVST). Over residues 4018–4029 (PVTSPSSASTGH) the composition is skewed to polar residues. O-linked (GalNAc...) serine glycans are attached at residues Ser-4021, Ser-4023, Ser-4024, and Ser-4026. Thr-4027, Thr-4031, and Thr-4036 each carry an O-linked (GalNAc...) threonine glycan. The segment covering 4030-4047 (ATPVPVTSTSSASTGDTT) has biased composition (low complexity). O-linked (GalNAc...) serine glycosylation is present at Ser-4037. Residues Thr-4038, Thr-4043, Thr-4046, and Thr-4047 are each glycosylated (O-linked (GalNAc...) threonine). The segment covering 4049–4093 (LPVTNASSLSTGHATPLHVTSPSSASRGDTSTLPVTDASSASTGH) has biased composition (polar residues). Asn-4053 carries an N-linked (GlcNAc...) asparagine glycan. O-linked (GalNAc...) threonine glycosylation is found at Thr-4078 and Thr-4084. Residues 4095–4107 (TPLPLTSLSSVST) show a composition bias toward low complexity. O-linked (GalNAc...) threonine glycans are attached at residues Thr-4110, Thr-4111, Thr-4116, Thr-4118, Thr-4123, Thr-4127, Thr-4132, Thr-4139, Thr-4142, Thr-4143, Thr-4148, Thr-4158, Thr-4159, Thr-4164, Thr-4171, Thr-4175, Thr-4180, Thr-4182, Thr-4187, Thr-4190, Thr-4191, Thr-4196, Thr-4198, Thr-4203, Thr-4207, Thr-4212, Thr-4214, Thr-4219, Thr-4223, and Thr-4239. Residues 4116–4142 (TDTSSASTGQATPLPVTSLSSVSTGDT) are compositionally biased toward polar residues. Residues 4149 to 4173 (IPSSASSGHTTSLPVTDASSVSTGH) show a composition bias toward polar residues. Low complexity predominate over residues 4180-4191 (TSTSSASTGDTT). A compositionally biased stretch (polar residues) spans 4196 to 4205 (TDTSSASTGH). Over residues 4212-4223 (TDTSSASTGHAT) the composition is skewed to polar residues. Residues 4242 to 4254 (AVSSATSASTVSS) are compositionally biased toward low complexity. Positions 4242-4288 (AVSSATSASTVSSDSPLKMETPGMTTPSLKTDGGRRTATSPPPTTSQ) are disordered. O-linked (GalNAc...) threonine glycosylation is found at Thr-4272, Thr-4278, Thr-4280, Thr-4289, Thr-4293, and Thr-4297. Positions 4397-4552 (PFWDDADFST…GLQFYRLHRE (156 aa)) constitute an NIDO domain. Positions 4553 to 4668 (ERPNYRLECL…YLCALYQQRR (116 aa)) constitute an AMOP domain. In terms of domain architecture, VWFD spans 4680–4880 (QPAWMFGDPH…TWQINGTGLL (201 aa)). Residues Asn-4715, Asn-4768, Asn-4787, Asn-4796, Asn-4831, Asn-4852, Asn-4875, Asn-4902, Asn-4928, Asn-4946, Asn-4982, Asn-4997, Asn-5045, Asn-5052, Asn-5100, and Asn-5119 are each glycosylated (N-linked (GlcNAc...) asparagine). In terms of domain architecture, EGF-like 1 spans 5118-5157 (QNQSCPVNYCYNQGHCYISQTLGCQPMCTCPPAFTDSRCF). 3 disulfide bridges follow: Cys-5122/Cys-5133, Cys-5127/Cys-5145, and Cys-5147/Cys-5156. Residues Asn-5185, Asn-5192, and Asn-5292 are each glycosylated (N-linked (GlcNAc...) asparagine). The EGF-like 2 domain occupies 5321–5360 (VSPCSRGYCDHGGQCQHLPSGPRCSCVSFSIYTAWGEHCE). 3 disulfide bridges follow: Cys-5324/Cys-5335, Cys-5329/Cys-5344, and Cys-5346/Cys-5359. The chain crosses the membrane as a helical span at residues 5369–5389 (FFGIFFGALGGLLLLGVGTFV).

A heterodimeric complex, composed of a mucin-4 alpha chain and a cysteine-rich transmembrane mucin-4 beta chain. Mucin-4 beta chain interacts with ERBB2 via the EGF-like domain 1. In nonpolarized cells, associates with ERBB2 and ERBB3. Proteolytically cleaved into 2 chains, mucin-4 alpha chain and mucin-4 beta chain. In terms of processing, highly O-glycosylated. Post-translationally, is predominantly N-glycosylated. In terms of tissue distribution, expressed in the thymus, thyroid, lung, trachea, esophagus, stomach, small intestine, colon, testis, prostate, ovary, uterus, placenta, and mammary and salivary glands. Expressed in carcinomas arising from some of these epithelia, such as lung cancers, squamous cell carcinomas of the upper aerodigestive tract, mammary carcinomas, biliary tract, colon, and cervix cancers. Minimally or not expressed in the normal pancreas or chronic pancreatitis, but is highly expressed in pancreatic tumors and pancreatic tumor cell lines.

Its subcellular location is the cell membrane. It localises to the secreted. Membrane-bound mucin, a family of highly glycosylated proteins that constitute the major component of the mucus, the slimy and viscous secretion covering epithelial surfaces. These glycoproteins play important roles in the protection of the epithelium and are implicated in epithelial renewal and differentiation. Regulates cellular behavior through both anti-adhesive effects on cell-cell and cell-extracellular matrix interactions and its ability to act as an intramembrane ligand for ERBB2. Plays an important role in proliferation and differentiation of epithelial cells by inducing specific phosphorylation of ERBB2. In polarized epithelial cells, segregates ERBB2 and other ERBB receptors and prevents ERBB2 from acting as a coreceptor. The interaction with ERBB2 leads to enhanced expression of CDKN1B. The formation of a MUC4-ERBB2-ERBB3-NRG1 complex leads to down-regulation of CDKN1B, resulting in repression of apoptosis and stimulation of proliferation. Its ability to promote tumor growth may be mainly due to repression of apoptosis as opposed to proliferation. In Homo sapiens (Human), this protein is Mucin-4 (MUC4).